The following is a 146-amino-acid chain: Large ribosomal subunit protein uL15 (146 aa).

A disordered region spans residues 1–58 (MNLSELRPAPGARKKPTRKGQGIGSGLGKTAGKGHKGQNARSGGGVRPGFEGGQMPLQ). 2 stretches are compositionally biased toward gly residues: residues 21-31 (QGIGSGLGKTA) and 42-52 (SGGGVRPGFEG).

Belongs to the universal ribosomal protein uL15 family. As to quaternary structure, part of the 50S ribosomal subunit.

Its function is as follows. Binds to the 23S rRNA. The polypeptide is Large ribosomal subunit protein uL15 (Desulforamulus reducens (strain ATCC BAA-1160 / DSM 100696 / MI-1) (Desulfotomaculum reducens)).